The following is a 1733-amino-acid chain: ATP-binding cassette sub-family A member 17 (1733 aa).

The next 7 membrane-spanning stretches (helical) occupy residues 22 to 42 (TLIT…VLYL), 262 to 282 (FPLL…NSVL), 306 to 326 (AWFI…TVLF), 342 to 362 (TLIF…AFMM), 372 to 392 (GTVI…YITF), 403 to 423 (ILSC…ISLF), and 444 to 464 (FAQV…IAFL). The 234-residue stretch at 519–752 (IEIQHLYKVF…YGAGYYMTII (234 aa)) folds into the ABC transporter 1 domain. ATP is bound at residue 555 to 562 (GHNGAGKT). N609 is a glycosylation site (N-linked (GlcNAc...) asparagine). Transmembrane regions (helical) follow at residues 906–926 (LVLS…LTFF), 1082–1102 (LVVN…ILTV), 1128–1148 (LLWD…VFLW), 1160–1180 (IPAV…LVYT), 1192–1212 (CVKL…LVTV), 1230–1250 (IFLI…YYNF), and 1287–1307 (IGKY…MLFL). Positions 1366-1599 (LVVKEVSKVY…FGISYSLQAK (234 aa)) constitute an ABC transporter 2 domain. 1401–1408 (GLNGAGKT) is a binding site for ATP. Polar residues predominate over residues 1681-1692 (ESSTKEQIQQEQ). Residues 1681–1733 (ESSTKEQIQQEQAVLASPSPPSNSRPISSPPSRLSSPTPKPLPSPPPSEPILL) are disordered. Residues 1704-1717 (SRPISSPPSRLSSP) are compositionally biased toward low complexity. Residues 1718–1733 (TPKPLPSPPPSEPILL) are compositionally biased toward pro residues.

This sequence belongs to the ABC transporter superfamily. ABCA family. N-glycosylated. As to expression, in the testis, detected predominantly in elongated spermatids at the late stage of germ cell development and in sperm, with no expression detected in immature germ cells such as spermatogonia and spermatocytes or in somatic cells such as Sertoli cells (at protein level). Expressed in the head and tail midpiece of elongated spermatids and sperm (at protein level). Expressed exclusively in the testis.

It is found in the endoplasmic reticulum membrane. The protein resides in the cytoplasm. The enzyme catalyses cholesterol(in) + ATP + H2O = cholesterol(out) + ADP + phosphate + H(+). Functionally, promotes cholesterol efflux from sperm which renders sperm capable of fertilization. Has also been shown to decrease levels of intracellular esterified neutral lipids including cholesteryl esters, fatty acid esters and triacylglycerols. This is ATP-binding cassette sub-family A member 17 from Mus musculus (Mouse).